Consider the following 500-residue polypeptide: uncharacterized protein (500 aa).

Residues 1–13 are compositionally biased toward low complexity; sequence MEPSQRSGSFSSI. The segment at 1–23 is disordered; that stretch reads MEPSQRSGSFSSISRRRSRVDSR. Ser9 is subject to Phosphoserine. The next 12 membrane-spanning stretches (helical) occupy residues 87–107, 126–146, 156–176, 183–203, 225–245, 261–281, 312–332, 351–371, 380–400, 408–428, 445–465, and 471–491; these read VSIAFILINSLMSDMSLAVAL, LVIGIPTLISLIFLYPMLCFA, LYFRPMVVSSFAHIFGHLLYC, WIYLILIGRMLNGIGFTTFLY, MNILAQTLGFMAGPFLGGILA, VASWVMLFMWFFYMLTIIFFF, FLLFFLAEVAFIAYFTVNGYQ, GNFIALSALIVAPFILASSFL, IMLGGLFLGILAVAIHLVLDA, VYFFLYSLMIYGYSIGSAPLI, IVVQVGVSLSNTFGSICGGAI, and VGFISLCLGLAAVVYMQLIFM.

This sequence belongs to the major facilitator superfamily.

It is found in the golgi apparatus. The protein localises to the membrane. This is an uncharacterized protein from Schizosaccharomyces pombe (strain 972 / ATCC 24843) (Fission yeast).